The sequence spans 374 residues: Peptide chain release factor 2 (374 aa).

An N5-methylglutamine modification is found at Gln-254.

It belongs to the prokaryotic/mitochondrial release factor family. Post-translationally, methylated by PrmC. Methylation increases the termination efficiency of RF2.

Its subcellular location is the cytoplasm. Its function is as follows. Peptide chain release factor 2 directs the termination of translation in response to the peptide chain termination codons UGA and UAA. In Renibacterium salmoninarum (strain ATCC 33209 / DSM 20767 / JCM 11484 / NBRC 15589 / NCIMB 2235), this protein is Peptide chain release factor 2.